Here is a 374-residue protein sequence, read N- to C-terminus: Probable tRNA pseudouridine synthase D (374 aa).

Aspartate 81 (nucleophile) is an active-site residue. Residues 141–340 (VFPNYFDVQR…RKGFQKMYDL (200 aa)) enclose the TRUD domain.

Belongs to the pseudouridine synthase TruD family.

The enzyme catalyses uridine(13) in tRNA = pseudouridine(13) in tRNA. Functionally, could be responsible for synthesis of pseudouridine from uracil-13 in transfer RNAs. The polypeptide is Probable tRNA pseudouridine synthase D (Nanoarchaeum equitans (strain Kin4-M)).